Reading from the N-terminus, the 219-residue chain is Small ribosomal subunit protein uS3c (219 aa).

Positions 47-118 (IRNHVRNSSN…KLRMTLVEVL (72 aa)) constitute a KH type-2 domain.

Belongs to the universal ribosomal protein uS3 family. Part of the 30S ribosomal subunit.

The protein localises to the plastid. It localises to the chloroplast. This is Small ribosomal subunit protein uS3c (rps3) from Chara vulgaris (Common stonewort).